Reading from the N-terminus, the 628-residue chain is DNA mismatch repair protein MutL (628 aa).

Positions Ser334 to Ala367 are disordered. Basic and acidic residues predominate over residues Gly357–Ala367.

This sequence belongs to the DNA mismatch repair MutL/HexB family.

This protein is involved in the repair of mismatches in DNA. It is required for dam-dependent methyl-directed DNA mismatch repair. May act as a 'molecular matchmaker', a protein that promotes the formation of a stable complex between two or more DNA-binding proteins in an ATP-dependent manner without itself being part of a final effector complex. This is DNA mismatch repair protein MutL from Opitutus terrae (strain DSM 11246 / JCM 15787 / PB90-1).